The following is a 383-amino-acid chain: MLISNTYNQHFPQLTQEQLARNATKKVICGMSGGVDSSVSAFILQQQGYQVEGLFMKNWEEDDDTDYCTAAADLADAQAVCDKLGIKLHKINFAAEYWDNVFEHFLTEYKAGRTPNPDILCNKEIKFKAFLEYAAEDLGADYIATGHYVRRAGDNENAKLLRGLDANKDQSYFLYTLSHKQVGQSLFPVGEIEKPIVRAIAEDLGLITAKKKDSTGICFIGERKFKDFLARYLPAQPGNIRTVDDEIIGRHDGLMYHTLGQRKGLGIGGLKNAGDEAWYVVDKDVENNELIVAQGHDHPRLFSKGLIASQLHWVDREPIRESLRCTVKTRYRQQDIPCVIEPIDDETIRVIFDEPQSAVTPGQSAVFYLGEVCLGGGIIAERI.

Residues 30 to 37 (GMSGGVDS) and methionine 56 each bind ATP. The interaction with target base in tRNA stretch occupies residues 116–118 (NPD). Cysteine 121 acts as the Nucleophile in catalysis. A disulfide bond links cysteine 121 and cysteine 218. Glycine 146 provides a ligand contact to ATP. The tract at residues 168–170 (KDQ) is interaction with tRNA. Cysteine 218 serves as the catalytic Cysteine persulfide intermediate. An interaction with tRNA region spans residues 330–331 (RY).

Belongs to the MnmA/TRMU family.

The protein resides in the cytoplasm. The enzyme catalyses S-sulfanyl-L-cysteinyl-[protein] + uridine(34) in tRNA + AH2 + ATP = 2-thiouridine(34) in tRNA + L-cysteinyl-[protein] + A + AMP + diphosphate + H(+). Catalyzes the 2-thiolation of uridine at the wobble position (U34) of tRNA, leading to the formation of s(2)U34. The sequence is that of tRNA-specific 2-thiouridylase MnmA from Haemophilus influenzae (strain 86-028NP).